We begin with the raw amino-acid sequence, 197 residues long: MYB-like transcription factor EOBII (197 aa).

HTH myb-type domains lie at 10–62 (DAEV…LNYL) and 63–117 (RPDV…QKHI). 2 DNA-binding regions (H-T-H motif) span residues 38 to 62 (WNSL…LNYL) and 90 to 113 (WSKI…RTRI). Positions 125 to 158 (GQAASSEQNDHQEACTSQMSNGPNDNTIDQTYSP) are disordered. Over residues 138 to 158 (ACTSQMSNGPNDNTIDQTYSP) the composition is skewed to polar residues.

As to expression, specifically expressed in flowers, mostly in stigmas, petal tubes and petal limbs, and, to a lower extent, in anthers and stamen. Also present at low levels in roots, stems, leaves and sepals.

The protein resides in the nucleus. Its function is as follows. MYB-type transcription factor controlling the production of volatile organic compounds (VOCs), including floral volatile benzenoids and phenylpropanoids (FVBP), in flowers of fragrant cultivars (e.g. cv. Mitchell and cv. V26) by regulating the expression of ODO1 and EOBI, key regulators of the shikimate pathway, and of several biosynthetic floral scent-related genes including IGS, PAL2 and CFAT. This scent, mostly produced in the evening and night by the petals, attracts the pollinators (e.g. the night-active hawkmoth pollinator Manduca sexta). Binds to and activates the ODO1 and EOBI promoters via MYB binding sites (MBS) 5'-AAACCTAAT-3' and 5'-CTAACT-3'. Regulates the promoters of IGS1, CFAT and PAL2. Controls flowers petal opening by modulating a global transcriptomic switch. This is MYB-like transcription factor EOBII from Petunia hybrida (Petunia).